The chain runs to 464 residues: Na(+)/H(+) antiporter NhaA 2 (464 aa).

11 helical membrane passes run 53–73 (VGGI…NSPW), 96–116 (LTLG…VVGL), 134–154 (ALPI…FVLV), 165–185 (GWAI…AVIS), 195–215 (FLLT…AVFY), 219–239 (IKAW…VCAQ), 257–277 (VLVH…GFAV), 313–333 (IAIP…LSGL), 340–360 (PITL…ILVT), 378–398 (WVDV…SLLI), and 412–432 (FVKI…AIVL).

The protein belongs to the NhaA Na(+)/H(+) (TC 2.A.33) antiporter family.

The protein localises to the cell membrane. It carries out the reaction Na(+)(in) + 2 H(+)(out) = Na(+)(out) + 2 H(+)(in). Na(+)/H(+) antiporter that extrudes sodium in exchange for external protons. This chain is Na(+)/H(+) antiporter NhaA 2, found in Mycolicibacterium vanbaalenii (strain DSM 7251 / JCM 13017 / BCRC 16820 / KCTC 9966 / NRRL B-24157 / PYR-1) (Mycobacterium vanbaalenii).